Here is a 479-residue protein sequence, read N- to C-terminus: Poly(A) polymerase catalytic subunit (479 aa).

Residues D202 and D204 contribute to the active site. Ca(2+) is bound by residues D202, D204, and D253.

It belongs to the poxviridae poly(A) polymerase catalytic subunit family. As to quaternary structure, heterodimer of a large (catalytic) subunit and a small (regulatory) subunit.

The catalysed reaction is RNA(n) + ATP = RNA(n)-3'-adenine ribonucleotide + diphosphate. Polymerase that creates the 3'-poly(A) tail of mRNA's. In Bos taurus (Bovine), this protein is Poly(A) polymerase catalytic subunit (OPG063).